A 314-amino-acid polypeptide reads, in one-letter code: tRNA dimethylallyltransferase (314 aa).

9–16 serves as a coordination point for ATP; it reads GPTAVGKT. Position 11-16 (11-16) interacts with substrate; that stretch reads TAVGKT. Residues 34–37 are interaction with substrate tRNA; it reads DSVQ.

Belongs to the IPP transferase family. As to quaternary structure, monomer. Mg(2+) serves as cofactor.

The catalysed reaction is adenosine(37) in tRNA + dimethylallyl diphosphate = N(6)-dimethylallyladenosine(37) in tRNA + diphosphate. Its function is as follows. Catalyzes the transfer of a dimethylallyl group onto the adenine at position 37 in tRNAs that read codons beginning with uridine, leading to the formation of N6-(dimethylallyl)adenosine (i(6)A). This is tRNA dimethylallyltransferase from Desulfitobacterium hafniense (strain Y51).